We begin with the raw amino-acid sequence, 491 residues long: Probable cytosol aminopeptidase (491 aa).

Mn(2+) is bound by residues lysine 261 and aspartate 266. Residue lysine 273 is part of the active site. Mn(2+) is bound by residues aspartate 285, aspartate 344, and glutamate 346. Residue arginine 348 is part of the active site.

It belongs to the peptidase M17 family. Requires Mn(2+) as cofactor.

It localises to the cytoplasm. It catalyses the reaction Release of an N-terminal amino acid, Xaa-|-Yaa-, in which Xaa is preferably Leu, but may be other amino acids including Pro although not Arg or Lys, and Yaa may be Pro. Amino acid amides and methyl esters are also readily hydrolyzed, but rates on arylamides are exceedingly low.. The catalysed reaction is Release of an N-terminal amino acid, preferentially leucine, but not glutamic or aspartic acids.. Presumably involved in the processing and regular turnover of intracellular proteins. Catalyzes the removal of unsubstituted N-terminal amino acids from various peptides. The polypeptide is Probable cytosol aminopeptidase (Picosynechococcus sp. (strain ATCC 27264 / PCC 7002 / PR-6) (Agmenellum quadruplicatum)).